The primary structure comprises 156 residues: Translationally controlled tumor protein 2 (156 aa).

The TCTP domain occupies 1 to 156 (MLVYQDILTG…LAYGLKEIKC (156 aa)).

Belongs to the TCTP family. In terms of tissue distribution, expressed in stems, cauline leaves, minor veins of rosette leaves, roots, lateral root primordia, vascular tissues of petioles and inflorescences, base of siliques, papillae and ovules. Not detected in root meristems, anthers or seeds. Expressed in stomata, trichomes and root cortex.

It localises to the nucleus. It is found in the cytoplasm. Its function is as follows. Regulates proliferation. Induces whole plant regeneration when expressed in heterologous systems. Involved in root growth and lateral root development, with a probable role in cell reprogramming. The long-distance transport of TCTP RNA and/or protein in plants may have an important role in regulation of growth and development. The polypeptide is Translationally controlled tumor protein 2 (Arabidopsis thaliana (Mouse-ear cress)).